We begin with the raw amino-acid sequence, 389 residues long: MDLFEYQARDMFEAHGVPVLAGIVAYTPEEAKAAAEKIGGVTVVKAQVKVGGRGKAGGVKVAKSADEALEHSTNILGMDIKGHTVNKVMIAQGADIAEEYYFSVLLDRANRNYLAMCSVEGGMEIEQLAVERPEALAKIAIDPAVGIDQAKADEIVAAAGFAEELRGKVADVILKLWDVFKKEDATLVEVNPLVKTGAGDIVALDGKVSLDENAEFRHAKHAQLEDKDAADPLEAKAKAQDLNYVKLDGEVGIIGNGAGLVMSTLDVVAYAGENHGNVKPANFLDIGGGASAEVMAAGLDVILGDEQVKSVFVNVFGGITACDAVAKGIVGALAELGHTANKPLVVRLDGNNVEEGRRILNEANHPLVTLAATMDEGADKAAELANAAK.

The ATP-grasp domain maps to 9–236 (RDMFEAHGVP…KDAADPLEAK (228 aa)). ATP-binding positions include lysine 45, 52–54 (GRG), alanine 94, and glutamate 99. Mg(2+)-binding residues include asparagine 191 and aspartate 205. Residues asparagine 256 and 318-320 (GIT) contribute to the substrate site.

The protein belongs to the succinate/malate CoA ligase beta subunit family. In terms of assembly, heterotetramer of two alpha and two beta subunits. Requires Mg(2+) as cofactor.

The catalysed reaction is succinate + ATP + CoA = succinyl-CoA + ADP + phosphate. The enzyme catalyses GTP + succinate + CoA = succinyl-CoA + GDP + phosphate. The protein operates within carbohydrate metabolism; tricarboxylic acid cycle; succinate from succinyl-CoA (ligase route): step 1/1. In terms of biological role, succinyl-CoA synthetase functions in the citric acid cycle (TCA), coupling the hydrolysis of succinyl-CoA to the synthesis of either ATP or GTP and thus represents the only step of substrate-level phosphorylation in the TCA. The beta subunit provides nucleotide specificity of the enzyme and binds the substrate succinate, while the binding sites for coenzyme A and phosphate are found in the alpha subunit. This Pseudarthrobacter chlorophenolicus (strain ATCC 700700 / DSM 12829 / CIP 107037 / JCM 12360 / KCTC 9906 / NCIMB 13794 / A6) (Arthrobacter chlorophenolicus) protein is Succinate--CoA ligase [ADP-forming] subunit beta.